The following is a 332-amino-acid chain: Glyceraldehyde-3-phosphate dehydrogenase 3 (332 aa).

NAD(+)-binding residues include R11, I12, and D33. Residues K46 and K63 each participate in a glycyl lysine isopeptide (Lys-Gly) (interchain with G-Cter in ubiquitin) cross-link. T120 lines the NAD(+) pocket. A D-glyceraldehyde 3-phosphate-binding site is contributed by 149–151; it reads SCT. Residue C150 is the Nucleophile of the active site. Cysteine persulfide occurs at positions 150 and 154. K160 is covalently cross-linked (Glycyl lysine isopeptide (Lys-Gly) (interchain with G-Cter in URM1)). D-glyceraldehyde 3-phosphate contacts are provided by residues T180, 209–210, and R232; that span reads TG. Phosphoserine is present on S302. Residue K307 forms a Glycyl lysine isopeptide (Lys-Gly) (interchain with G-Cter in URM1) linkage. 2 residues coordinate NAD(+): N314 and Y318.

Belongs to the glyceraldehyde-3-phosphate dehydrogenase family. As to quaternary structure, homotetramer. Conjugated to URM1, a ubiquitin-like protein, in response to oxidative stresses. The attachment of URM1 to lysine residues exclusively depends on the presence of a peroxidatic cysteine in the target protein, with low specificity for the particular residue, motif, or structural context at which urmylation can occur. The URM1-conjugation reaction is mechanistically and directly coupled to the process of cysteine persulfidation, transfering the sulfur atom of the URM1 thiocarboxyl group to redox-active cysteine residues in the target protein if it is exposed to oxidative conditions. Post-translationally, persulfidated on specific redox-active cysteine residues. Persulfidation (also called protein S-sulfhydration) may provide a molecular mechanism that enables cells to protect vulnerable cysteine residues from reactive oxygen species (ROS) under stress conditions.

The protein localises to the cytoplasm. Its subcellular location is the mitochondrion. It carries out the reaction D-glyceraldehyde 3-phosphate + phosphate + NAD(+) = (2R)-3-phospho-glyceroyl phosphate + NADH + H(+). The enzyme catalyses NADH + H2O = (6R)-NADHX. The catalysed reaction is NADH + H2O = (6S)-NADHX. It catalyses the reaction NADPH + H2O = (6R)-NADPHX. It carries out the reaction NADPH + H2O = (6S)-NADPHX. Its pathway is carbohydrate degradation; glycolysis; pyruvate from D-glyceraldehyde 3-phosphate: step 1/5. In terms of biological role, glyceraldehyde-3-phosphate dehydrogenase (GAPDH) involved in glycolysis and gluconeogenesis. Catalyzes the reaction of glyceraldehyde-3-phosphate to 1,3 bis-phosphoglycerate. The contribution of the TDH1, TDH2, and TDH3 to the total glyceraldehyde-3-phosphate dehydrogenase activity is 10-15, 25-30, and 50-60%, respectively. Functionally, as a side activity, catalyzes the hydration of the nicotinamide ring of NADH or NADPH at the C6 position to give the corresponding hydrates, NADHX and NADPHX, which exist as R and S epimers, that cannot act as electron donors or acceptors and inhibit several dehydrogenases, making them toxic. This chain is Glyceraldehyde-3-phosphate dehydrogenase 3, found in Saccharomyces cerevisiae (strain ATCC 204508 / S288c) (Baker's yeast).